The sequence spans 467 residues: Peptidoglycan-N-acetylmuramic acid deacetylase PdaC (467 aa).

The chain crosses the membrane as a helical span at residues Ile6 to His26. The region spanning Lys278 to Val452 is the NodB homology domain. Asp285 (proton acceptor) is an active-site residue. Asp286, His336, and His340 together coordinate a divalent metal cation. His427 acts as the Proton donor in catalysis.

It in the N-terminal section; belongs to the RsiV family. In the C-terminal section; belongs to the polysaccharide deacetylase family.

The protein resides in the cell membrane. Activated by divalent metal cations; Mn(2+) is the most efficient, followed by Ca(2+) and Mg(2+). In contrast to PgdA from S.pneumoniae, these ions are not absolutely required for deacetylase activity. Its function is as follows. Catalyzes the deacetylation of N-acetylmuramic acid (MurNAc) residues in peptidoglycan, a modification that confers resistance to lysosyme. Is not able to deacetylate N-acetylglucosamine (GlcNAc) residues in peptidoglycan, but can deacylate chitin oligomers such as GlcNAc4 and GlcNAc5. Is essentially not active toward chitosan (partially deacetylated GlcNAc polymer) and has very low activity toward chitin (GlcNAc polymer). Does not deacetylate GlcNAc. This chain is Peptidoglycan-N-acetylmuramic acid deacetylase PdaC (pdaC), found in Bacillus subtilis (strain 168).